The sequence spans 284 residues: MNNITSFSLIAPAKLNLFLHINGRRDDGYHELETLFTFLNYGDELSFELSDLPAIIVTGDTNGIATTDNLIYKAALLLQTQCKIKQGVKINLIKRLPMGGGVGGGSSDAASTLLALNKLWKTALSLDELAHLGLQLGADVPVFIHGKSAIAHGIGEQLEQVMLEQKWYCVVFPNQHVSTAKIFTHPELKRDTPKISGDWQQHILTNDCESLVKKLCPEVEKTLQWLLKYAPSKMTGTGSCCFVEFATQVQAQDVLANLPHTWQGFIASSVNTSPAHTELAAIFD.

The active site involves K14. 97–107 (PMGGGVGGGSS) is a binding site for ATP. Residue D139 is part of the active site.

The protein belongs to the GHMP kinase family. IspE subfamily.

It catalyses the reaction 4-CDP-2-C-methyl-D-erythritol + ATP = 4-CDP-2-C-methyl-D-erythritol 2-phosphate + ADP + H(+). The protein operates within isoprenoid biosynthesis; isopentenyl diphosphate biosynthesis via DXP pathway; isopentenyl diphosphate from 1-deoxy-D-xylulose 5-phosphate: step 3/6. Catalyzes the phosphorylation of the position 2 hydroxy group of 4-diphosphocytidyl-2C-methyl-D-erythritol. The polypeptide is 4-diphosphocytidyl-2-C-methyl-D-erythritol kinase (Pseudoalteromonas translucida (strain TAC 125)).